Consider the following 438-residue polypeptide: MISLRHTALGLALSLAFTGQALAVTTIPFWHSMEGELGKEVDSLAQRFNQANPDYKIVPVYKGNYEQNLSAGIAAFRTGNAPAILQVYEVGTATMMASKAIKPVYEVFKDAGINFDESQFVPTVAGYYTDAKSGHLLSQPFNSSTPVLYYNKDAFKKAGLDPEQPPKTWQELADYTAKLRAAGMKCGYASGWQGWIQLENFSAWNGLPFASKNNGFDGTDAVLEFNKPEQVKHIALLEEMNKKGDFSYVGRKDESTEKFYNGDCAMTTASSGSLANIRQYAKFNYGVGMMPYDADIKGAPQNAIIGGASLWVMQGKYKETYTGVAKFLDFLAKPENAAEWHQKTGYLPITTAAYELTREQGYYDKNPGADIATRQMLNKPPLPFTKGLRLGNMPQIRTIVDEELESVWTGKKTPQQALDTAVERGNQLLRRFEKASKS.

The signal sequence occupies residues 1–23; that stretch reads MISLRHTALGLALSLAFTGQALA. Tyrosine 65, glutamate 89, serine 144, serine 270, glycine 307, tyrosine 346, and arginine 397 together coordinate sn-glycerol 3-phosphate.

This sequence belongs to the bacterial solute-binding protein 1 family. In terms of assembly, the complex is composed of two ATP-binding proteins (UgpC), two transmembrane proteins (UgpA and UgpE) and a solute-binding protein (UgpB).

Its subcellular location is the periplasm. Its function is as follows. Part of the ABC transporter complex UgpBAEC involved in sn-glycerol-3-phosphate (G3P) import. Binds G3P. The sequence is that of sn-glycerol-3-phosphate-binding periplasmic protein UgpB (ugpB) from Salmonella paratyphi A (strain ATCC 9150 / SARB42).